The primary structure comprises 912 residues: Glutamate receptor 3.2 (912 aa).

Residues 1–22 (MFWVLVLLSFIVLIGDGMISEG) form the signal peptide. Topologically, residues 23-587 (AGLRPRYVDV…TPWAFLRPFT (565 aa)) are extracellular. Asn306, Asn338, Asn378, Asn417, Asn435, Asn445, and Asn532 each carry an N-linked (GlcNAc...) asparagine glycan. Glycine contacts are provided by residues 544-546 (DIA) and Arg551. L-methionine-binding positions include 544-546 (DIA) and Arg551. A helical transmembrane segment spans residues 588–608 (PPMWAVTAAFFLIVGSVIWIL). Residues 609–617 (EHRINDEFR) lie on the Cytoplasmic side of the membrane. A helical transmembrane segment spans residues 618-638 (GPPRKQIVTILWFSFSTMFFS). Topologically, residues 639-649 (HRENTVSTLGR) are cytoplasmic. The helical transmembrane segment at 650–670 (AVLLIWLFVVLIITSSYTASL) threads the bilayer. The Extracellular portion of the chain corresponds to 671–828 (TSILTVQQLN…EDSEQLKLRS (158 aa)). Tyr703 serves as a coordination point for glycine. Tyr703 lines the L-methionine pocket. A glycan (N-linked (GlcNAc...) asparagine) is linked at Asn734. 743–746 (ERPY) provides a ligand contact to glycine. 743–746 (ERPY) contacts L-methionine. Cys755 and Cys809 are joined by a disulfide. N-linked (GlcNAc...) asparagine glycans are attached at residues Asn808 and Asn813. Residues 829-849 (FWGLFLVCGISCFIALFIYFF) form a helical membrane-spanning segment. At 850 to 912 (KIVRDFFRHG…DLSLKPSRPI (63 aa)) the chain is on the cytoplasmic side. A disordered region spans residues 888–912 (KEDESKRRMKRKRNDDLSLKPSRPI).

It belongs to the glutamate-gated ion channel (TC 1.A.10.1) family. In terms of assembly, forms a heteromeric channel with GLR3.4. In terms of tissue distribution, expressed in leaves and siliques, and at lower level in flowers and roots. Detected in the vascular tissues of both shoots and roots. Expressed in root phloem.

The protein localises to the cell membrane. In terms of biological role, glutamate-gated receptor that probably acts as a non-selective cation channel. May be involved in light-signal transduction and calcium homeostasis via the regulation of calcium influx into cells. Could play a role in calcium unloading from the xylem vessels. Acts as a negative regulator of lateral root initiation and development. May restrict primordia numbers and position along the root axis by a signaling process originating in the phloem. This chain is Glutamate receptor 3.2, found in Arabidopsis thaliana (Mouse-ear cress).